The chain runs to 261 residues: Glucosamine-6-phosphate deaminase (261 aa).

D67 functions as the Proton acceptor; for enolization step in the catalytic mechanism. Residue D136 is the For ring-opening step of the active site. The active-site Proton acceptor; for ring-opening step is H138. E143 functions as the For ring-opening step in the catalytic mechanism.

The protein belongs to the glucosamine/galactosamine-6-phosphate isomerase family. NagB subfamily.

It catalyses the reaction alpha-D-glucosamine 6-phosphate + H2O = beta-D-fructose 6-phosphate + NH4(+). The protein operates within amino-sugar metabolism; N-acetylneuraminate degradation; D-fructose 6-phosphate from N-acetylneuraminate: step 5/5. In terms of biological role, catalyzes the reversible isomerization-deamination of glucosamine 6-phosphate (GlcN6P) to form fructose 6-phosphate (Fru6P) and ammonium ion. This Mycolicibacterium smegmatis (strain ATCC 700084 / mc(2)155) (Mycobacterium smegmatis) protein is Glucosamine-6-phosphate deaminase.